The chain runs to 481 residues: Aspartyl/glutamyl-tRNA(Asn/Gln) amidotransferase subunit B (481 aa).

This sequence belongs to the GatB/GatE family. GatB subfamily. In terms of assembly, heterotrimer of A, B and C subunits.

The catalysed reaction is L-glutamyl-tRNA(Gln) + L-glutamine + ATP + H2O = L-glutaminyl-tRNA(Gln) + L-glutamate + ADP + phosphate + H(+). It carries out the reaction L-aspartyl-tRNA(Asn) + L-glutamine + ATP + H2O = L-asparaginyl-tRNA(Asn) + L-glutamate + ADP + phosphate + 2 H(+). Its function is as follows. Allows the formation of correctly charged Asn-tRNA(Asn) or Gln-tRNA(Gln) through the transamidation of misacylated Asp-tRNA(Asn) or Glu-tRNA(Gln) in organisms which lack either or both of asparaginyl-tRNA or glutaminyl-tRNA synthetases. The reaction takes place in the presence of glutamine and ATP through an activated phospho-Asp-tRNA(Asn) or phospho-Glu-tRNA(Gln). In Pseudomonas fluorescens (strain ATCC BAA-477 / NRRL B-23932 / Pf-5), this protein is Aspartyl/glutamyl-tRNA(Asn/Gln) amidotransferase subunit B.